The sequence spans 436 residues: MDRSEGMDTLENSMPSGMSMGMTMGGHQGHPPPDIKPDISSLTSPTSTHGYYGFGPGGMPSMASSTQPSPGPQQMHSPGMHSPTSSMGSPPMLCLSPSGPSPSPGLPHSSLHTKHICAICGDRASGKHYGVYSCEGCKGFFKRTVRKDLTYACRDDKNCMIDKRQRNRCQYCRYMKCLSMGMKREAVQEERQRVKEKGDGEVESTSGANNDMPVEQILEAELAVDPKIDTYIDAQKDPVTNICQAADKQLFTLVEWAKRIPHFTELPLEDQVILLRAGWNELLIAGFSHRSIMAKDGILLATGLHVHRSSAHQAGVGTIFDRVLTELVAKMRDMKMDKTELGCLRAVVLFNPDAKGLTAVQEVEQLREKVYASLEEYTKSRYPEEPGRFAKLLLRLPALRSIGLKCLEHLFFFKLIGDQPIDTFLMEMLENPSPAT.

The interval methionine 1–histidine 108 is disordered. Residues methionine 1–isoleucine 116 are modulating. The segment covering serine 13–methionine 22 has biased composition (low complexity). Polar residues-rich tracts occupy residues serine 40–histidine 49 and methionine 62–histidine 76. Residues serine 85–serine 98 show a composition bias toward low complexity. 2 NR C4-type zinc fingers span residues cysteine 117 to cysteine 137 and cysteine 153 to cysteine 172. The segment at residues cysteine 117–methionine 182 is a DNA-binding region (nuclear receptor). The tract at residues lysine 183–serine 206 is hinge. The span at glutamate 189–glycine 200 shows a compositional bias: basic and acidic residues. The disordered stretch occupies residues glutamate 189 to asparagine 209. In terms of domain architecture, NR LBD spans asparagine 209–proline 432. 9-cis-retinoate contacts are provided by arginine 290 and alanine 301.

Belongs to the nuclear hormone receptor family. NR2 subfamily. Homodimer (via ligand-binding domain). Heterodimer. Homotetramer consisting of 2 canonical homodimers. Within the tetramer, each monomer binds one molecule of 9C-RA and a NCOA1-derived peptide containing an L-X(2)-L-L motif.

The protein localises to the nucleus. In terms of biological role, ligand-dependent transcription factor probably involved in the retinoic acid response pathway. Binds 9-cis-retinoic acid (9C-RA) and, to a lesser extent, docosahexaenoic acid (DHA), phytanic acid, methoprene acid and oleic acid. Binds to double-stranded DNA sequences containing direct repeats (DR) with the consensus sequence 5'-[AG]GGTCA-3' and 1, 2, 3, 4 or 5 nucleotides in between (DR1, DR2, DR3. DR4 and DR5, respectively). Binding to DR1 is strongest. Transactivates gene expression when 9C-RA or DHA is bound. This Biomphalaria glabrata (Bloodfluke planorb) protein is Retinoic acid receptor RXR.